A 238-amino-acid chain; its full sequence is Carboxymethylenebutenolidase (238 aa).

Catalysis depends on residues Cys123, Asp171, and His201.

The protein belongs to the dienelactone hydrolase family. As to quaternary structure, monomer.

It catalyses the reaction 2-(5-oxo-2,5-dihydrofuran-2-ylidene)acetate + H2O = 4-oxohex-2-enedioate + H(+). The protein operates within aromatic compound metabolism; 3-chlorocatechol degradation. Functionally, ring cleavage of cyclic ester dienelactone to produce maleylacetate. The sequence is that of Carboxymethylenebutenolidase (tcbE) from Pseudomonas sp. (strain P51).